We begin with the raw amino-acid sequence, 84 residues long: Cytochrome b559 subunit alpha (84 aa).

A helical transmembrane segment spans residues 24–38 (IIHAVTLPAIFIAGF). Histidine 26 serves as a coordination point for heme.

This sequence belongs to the PsbE/PsbF family. In terms of assembly, heterodimer of an alpha subunit and a beta subunit. PSII is composed of 1 copy each of membrane proteins PsbA, PsbB, PsbC, PsbD, PsbE, PsbF, PsbH, PsbI, PsbJ, PsbK, PsbL, PsbM, PsbT, PsbX, PsbY, Psb30/Ycf12, peripheral proteins PsbO, CyanoQ (PsbQ), PsbU, PsbV and a large number of cofactors. It forms dimeric complexes. Heme b serves as cofactor.

It is found in the cellular thylakoid membrane. In terms of biological role, this b-type cytochrome is tightly associated with the reaction center of photosystem II (PSII). PSII is a light-driven water:plastoquinone oxidoreductase that uses light energy to abstract electrons from H(2)O, generating O(2) and a proton gradient subsequently used for ATP formation. It consists of a core antenna complex that captures photons, and an electron transfer chain that converts photonic excitation into a charge separation. This is Cytochrome b559 subunit alpha from Prochlorococcus marinus subsp. pastoris (strain CCMP1986 / NIES-2087 / MED4).